The primary structure comprises 140 residues: MATERTLSIIKPDATRRNLTGKINAVFEDAGLRIVAQKRVQLSEAEAGAFYAVHKDRPFYGELVSFMVSGPVVLQVLEGENAVLKHRDVMGATDPKKAAPGTVRAQFAESIEANSVHGSDSLENANTEIAFFFAQTEILP.

Residues K11, F59, R87, T93, R104, and N114 each contribute to the ATP site. The active-site Pros-phosphohistidine intermediate is H117.

It belongs to the NDK family. As to quaternary structure, homotetramer. It depends on Mg(2+) as a cofactor.

It is found in the cytoplasm. The catalysed reaction is a 2'-deoxyribonucleoside 5'-diphosphate + ATP = a 2'-deoxyribonucleoside 5'-triphosphate + ADP. The enzyme catalyses a ribonucleoside 5'-diphosphate + ATP = a ribonucleoside 5'-triphosphate + ADP. Its function is as follows. Major role in the synthesis of nucleoside triphosphates other than ATP. The ATP gamma phosphate is transferred to the NDP beta phosphate via a ping-pong mechanism, using a phosphorylated active-site intermediate. The sequence is that of Nucleoside diphosphate kinase from Gluconacetobacter diazotrophicus (strain ATCC 49037 / DSM 5601 / CCUG 37298 / CIP 103539 / LMG 7603 / PAl5).